Consider the following 538-residue polypeptide: 2-isopropylmalate synthase (538 aa).

A Pyruvate carboxyltransferase domain is found at 6 to 277 (LIIFDTTLRD…DSTVPLSTID (272 aa)). Mn(2+) contacts are provided by Asp15, His206, His208, and Asn242. A regulatory domain region spans residues 406–538 (RLEQVQVSCG…AHPDAAAQKL (133 aa)).

This sequence belongs to the alpha-IPM synthase/homocitrate synthase family. LeuA type 1 subfamily. In terms of assembly, homodimer. Mn(2+) is required as a cofactor.

It is found in the cytoplasm. The catalysed reaction is 3-methyl-2-oxobutanoate + acetyl-CoA + H2O = (2S)-2-isopropylmalate + CoA + H(+). It participates in amino-acid biosynthesis; L-leucine biosynthesis; L-leucine from 3-methyl-2-oxobutanoate: step 1/4. Catalyzes the condensation of the acetyl group of acetyl-CoA with 3-methyl-2-oxobutanoate (2-ketoisovalerate) to form 3-carboxy-3-hydroxy-4-methylpentanoate (2-isopropylmalate). This Gloeobacter violaceus (strain ATCC 29082 / PCC 7421) protein is 2-isopropylmalate synthase.